Consider the following 100-residue polypeptide: MYLSPQEKDKLLVVTAALLAERRLNRGLKLNHPEAVAWLSFQVLEGARDGKSVSTLMNEGTTWLTKEQVMEGVPELIHEVQIEAVFPDGTKLVTLHNPIS.

This sequence belongs to the urease gamma subunit family. In terms of assembly, heterotrimer of UreA (gamma), UreB (beta) and UreC (alpha) subunits. Three heterotrimers associate to form the active enzyme.

It localises to the cytoplasm. It carries out the reaction urea + 2 H2O + H(+) = hydrogencarbonate + 2 NH4(+). Its pathway is nitrogen metabolism; urea degradation; CO(2) and NH(3) from urea (urease route): step 1/1. The sequence is that of Urease subunit gamma from Prochlorococcus marinus (strain NATL2A).